Consider the following 249-residue polypeptide: Proteasome subunit alpha type-4 (249 aa).

Belongs to the peptidase T1A family. The 26S proteasome consists of a 20S proteasome core and two 19S regulatory subunits. The 20S proteasome core is composed of 28 subunits that are arranged in four stacked rings, resulting in a barrel-shaped structure. The two end rings are each formed by seven alpha subunits, and the two central rings are each formed by seven beta subunits. The catalytic chamber with the active sites is on the inside of the barrel.

The protein resides in the cytoplasm. The protein localises to the nucleus. The proteasome is a multicatalytic proteinase complex which is characterized by its ability to cleave peptides with Arg, Phe, Tyr, Leu, and Glu adjacent to the leaving group at neutral or slightly basic pH. The proteasome has an ATP-dependent proteolytic activity. The polypeptide is Proteasome subunit alpha type-4 (PAC1) (Petunia hybrida (Petunia)).